The sequence spans 358 residues: Photosystem II protein D1 1 (358 aa).

3 consecutive transmembrane segments (helical) span residues 28 to 45, 117 to 132, and 141 to 155; these read YVGW…AATI, HFLI…QWEL, and WICV…AAFA. His-117 lines the chlorophyll a pocket. A pheophytin a-binding site is contributed by Tyr-125. Residues Asp-169 and Glu-188 each contribute to the [CaMn4O5] cluster site. The chain crosses the membrane as a helical span at residues 196–217; the sequence is FHMLGVAGVFGGSLFSAMHGSL. Chlorophyll a is bound at residue His-197. Residues His-214 and 263-264 each bind a quinone; that span reads SF. His-214 lines the Fe cation pocket. His-271 contributes to the Fe cation binding site. A helical transmembrane segment spans residues 273–287; it reads FLGAWPVIGIWFTSM. [CaMn4O5] cluster contacts are provided by His-331, Glu-332, Asp-341, and Ala-343. The propeptide occupies 344–358; sequence AAESTPVALQAPAIG.

It belongs to the reaction center PufL/M/PsbA/D family. In terms of assembly, PSII is composed of 1 copy each of membrane proteins PsbA, PsbB, PsbC, PsbD, PsbE, PsbF, PsbH, PsbI, PsbJ, PsbK, PsbL, PsbM, PsbT, PsbX, PsbY, PsbZ, Psb30/Ycf12, peripheral proteins PsbO, CyanoQ (PsbQ), PsbU, PsbV and a large number of cofactors. It forms dimeric complexes. The cofactor is The D1/D2 heterodimer binds P680, chlorophylls that are the primary electron donor of PSII, and subsequent electron acceptors. It shares a non-heme iron and each subunit binds pheophytin, quinone, additional chlorophylls, carotenoids and lipids. D1 provides most of the ligands for the Mn4-Ca-O5 cluster of the oxygen-evolving complex (OEC). There is also a Cl(-1) ion associated with D1 and D2, which is required for oxygen evolution. The PSII complex binds additional chlorophylls, carotenoids and specific lipids.. In terms of processing, tyr-160 forms a radical intermediate that is referred to as redox-active TyrZ, YZ or Y-Z. C-terminally processed by CtpA; processing is essential to allow assembly of the oxygen-evolving complex and thus photosynthetic growth.

It is found in the cellular thylakoid membrane. The catalysed reaction is 2 a plastoquinone + 4 hnu + 2 H2O = 2 a plastoquinol + O2. Its function is as follows. Photosystem II (PSII) is a light-driven water:plastoquinone oxidoreductase that uses light energy to abstract electrons from H(2)O, generating O(2) and a proton gradient subsequently used for ATP formation. It consists of a core antenna complex that captures photons, and an electron transfer chain that converts photonic excitation into a charge separation. The D1/D2 (PsbA/PsbD) reaction center heterodimer binds P680, the primary electron donor of PSII as well as several subsequent electron acceptors. This Synechococcus sp. (strain CC9902) protein is Photosystem II protein D1 1.